A 116-amino-acid polypeptide reads, in one-letter code: Iron-sulfur cluster insertion protein ErpA (116 aa).

Iron-sulfur cluster-binding residues include Cys-44, Cys-108, and Cys-110.

This sequence belongs to the HesB/IscA family. In terms of assembly, homodimer. Iron-sulfur cluster serves as cofactor.

Functionally, required for insertion of 4Fe-4S clusters for at least IspG. This chain is Iron-sulfur cluster insertion protein ErpA, found in Pseudomonas fluorescens (strain ATCC BAA-477 / NRRL B-23932 / Pf-5).